The chain runs to 221 residues: Lipoprotein-releasing system ATP-binding protein LolD (221 aa).

In terms of domain architecture, ABC transporter spans 6–220; sequence LILKKISKHY…YNLKNGLLNI (215 aa). 42–49 lines the ATP pocket; it reads GSSGSGKS.

Belongs to the ABC transporter superfamily. Lipoprotein translocase (TC 3.A.1.125) family. As to quaternary structure, the complex is composed of two ATP-binding proteins (LolD) and two transmembrane proteins (LolC and LolE).

Its subcellular location is the cell inner membrane. Its function is as follows. Part of the ABC transporter complex LolCDE involved in the translocation of mature outer membrane-directed lipoproteins, from the inner membrane to the periplasmic chaperone, LolA. Responsible for the formation of the LolA-lipoprotein complex in an ATP-dependent manner. This is Lipoprotein-releasing system ATP-binding protein LolD from Rickettsia typhi (strain ATCC VR-144 / Wilmington).